We begin with the raw amino-acid sequence, 409 residues long: D-galactonate dehydratase family member Achl_0790 (409 aa).

Asp-217 is a binding site for Mg(2+). His-219 is a binding site for D-arabinonate. Glu-243 and Glu-269 together coordinate Mg(2+). 4 residues coordinate D-arabinonate: Glu-269, Arg-290, His-319, and Glu-346.

Belongs to the mandelate racemase/muconate lactonizing enzyme family. GalD subfamily.

Has no detectable activity with D-mannonate and with a panel of 70 other acid sugars (in vitro), in spite of the conservation of the residues that are expected to be important for catalytic activity and cofactor binding. May have evolved a divergent function. This Pseudarthrobacter chlorophenolicus (strain ATCC 700700 / DSM 12829 / CIP 107037 / JCM 12360 / KCTC 9906 / NCIMB 13794 / A6) (Arthrobacter chlorophenolicus) protein is D-galactonate dehydratase family member Achl_0790.